A 408-amino-acid chain; its full sequence is Argininosuccinate synthase (408 aa).

ATP is bound by residues 12–20 (AYSGGLDTS) and alanine 39. 2 residues coordinate L-citrulline: tyrosine 90 and serine 95. Glycine 120 lines the ATP pocket. Residues threonine 122, asparagine 126, and aspartate 127 each contribute to the L-aspartate site. Asparagine 126 is an L-citrulline binding site. Positions 130, 181, 190, 266, and 278 each coordinate L-citrulline.

The protein belongs to the argininosuccinate synthase family. Type 1 subfamily. Homotetramer.

The protein resides in the cytoplasm. It carries out the reaction L-citrulline + L-aspartate + ATP = 2-(N(omega)-L-arginino)succinate + AMP + diphosphate + H(+). The protein operates within amino-acid biosynthesis; L-arginine biosynthesis; L-arginine from L-ornithine and carbamoyl phosphate: step 2/3. This Methylococcus capsulatus (strain ATCC 33009 / NCIMB 11132 / Bath) protein is Argininosuccinate synthase.